Reading from the N-terminus, the 252-residue chain is Triosephosphate isomerase (252 aa).

Residue 10 to 12 (NWK) participates in substrate binding. His96 (electrophile) is an active-site residue. Glu168 (proton acceptor) is an active-site residue. Substrate-binding positions include Gly174, Ser214, and 235 to 236 (GG).

It belongs to the triosephosphate isomerase family. As to quaternary structure, homodimer.

It localises to the cytoplasm. It carries out the reaction D-glyceraldehyde 3-phosphate = dihydroxyacetone phosphate. It functions in the pathway carbohydrate biosynthesis; gluconeogenesis. It participates in carbohydrate degradation; glycolysis; D-glyceraldehyde 3-phosphate from glycerone phosphate: step 1/1. Involved in the gluconeogenesis. Catalyzes stereospecifically the conversion of dihydroxyacetone phosphate (DHAP) to D-glyceraldehyde-3-phosphate (G3P). The chain is Triosephosphate isomerase from Streptococcus equi subsp. zooepidemicus (strain MGCS10565).